The primary structure comprises 275 residues: Large ribosomal subunit protein uL2 (275 aa).

The disordered stretch occupies residues 221-275 (RGSAMTPRDHPHGGGEGKAPRGMPPKTPWGKPALGKRTRRNKKSDRFIIRRRYEA). Residues 227 to 239 (PRDHPHGGGEGKA) are compositionally biased toward basic and acidic residues. Over residues 254–263 (LGKRTRRNKK) the composition is skewed to basic residues. Basic and acidic residues predominate over residues 264–275 (SDRFIIRRRYEA).

It belongs to the universal ribosomal protein uL2 family. As to quaternary structure, part of the 50S ribosomal subunit. Forms a bridge to the 30S subunit in the 70S ribosome.

Functionally, one of the primary rRNA binding proteins. Required for association of the 30S and 50S subunits to form the 70S ribosome, for tRNA binding and peptide bond formation. It has been suggested to have peptidyltransferase activity; this is somewhat controversial. Makes several contacts with the 16S rRNA in the 70S ribosome. This Thermomicrobium roseum (strain ATCC 27502 / DSM 5159 / P-2) protein is Large ribosomal subunit protein uL2.